The primary structure comprises 102 residues: Small ribosomal subunit protein uS14m (102 aa).

Belongs to the universal ribosomal protein uS14 family.

It is found in the mitochondrion. The sequence is that of Small ribosomal subunit protein uS14m (RPS14) from Paramecium tetraurelia.